A 115-amino-acid chain; its full sequence is Ribonuclease P protein component (115 aa).

It belongs to the RnpA family. In terms of assembly, consists of a catalytic RNA component (M1 or rnpB) and a protein subunit.

It carries out the reaction Endonucleolytic cleavage of RNA, removing 5'-extranucleotides from tRNA precursor.. Its function is as follows. RNaseP catalyzes the removal of the 5'-leader sequence from pre-tRNA to produce the mature 5'-terminus. It can also cleave other RNA substrates such as 4.5S RNA. The protein component plays an auxiliary but essential role in vivo by binding to the 5'-leader sequence and broadening the substrate specificity of the ribozyme. This chain is Ribonuclease P protein component, found in Symbiobacterium thermophilum (strain DSM 24528 / JCM 14929 / IAM 14863 / T).